A 414-amino-acid chain; its full sequence is Nuclear hormone receptor family member nhr-213 (414 aa).

The segment at residues 21–99 (IVLCKVCALS…LGMTPENVQF (79 aa)) is a DNA-binding region (nuclear receptor). 2 consecutive NR C4-type zinc fingers follow at residues 24-44 (CKVC…CRAC) and 62-82 (CKKG…CRLC). Positions 162–414 (SAAKKMNSLE…DFSDPDIFDC (253 aa)) constitute an NR LBD domain.

This sequence belongs to the nuclear hormone receptor family.

Its subcellular location is the nucleus. Its function is as follows. Orphan nuclear receptor. The chain is Nuclear hormone receptor family member nhr-213 (nhr-213) from Caenorhabditis elegans.